The following is a 253-amino-acid chain: Triosephosphate isomerase (253 aa).

8-10 (NWK) is a binding site for substrate. Catalysis depends on His93, which acts as the Electrophile. Residue Glu165 is the Proton acceptor of the active site. Substrate-binding positions include Gly171, Ser210, and 231 to 232 (GG).

Belongs to the triosephosphate isomerase family. As to quaternary structure, homodimer.

It localises to the cytoplasm. It carries out the reaction D-glyceraldehyde 3-phosphate = dihydroxyacetone phosphate. The protein operates within carbohydrate biosynthesis; gluconeogenesis. Its pathway is carbohydrate degradation; glycolysis; D-glyceraldehyde 3-phosphate from glycerone phosphate: step 1/1. In terms of biological role, involved in the gluconeogenesis. Catalyzes stereospecifically the conversion of dihydroxyacetone phosphate (DHAP) to D-glyceraldehyde-3-phosphate (G3P). This is Triosephosphate isomerase from Francisella tularensis subsp. tularensis (strain FSC 198).